A 363-amino-acid chain; its full sequence is Peptide chain release factor 2 (363 aa).

Residue Gln251 is modified to N5-methylglutamine.

The protein belongs to the prokaryotic/mitochondrial release factor family. In terms of processing, methylated by PrmC. Methylation increases the termination efficiency of RF2.

It is found in the cytoplasm. In terms of biological role, peptide chain release factor 2 directs the termination of translation in response to the peptide chain termination codons UGA and UAA. This chain is Peptide chain release factor 2, found in Helicobacter pylori (strain P12).